The sequence spans 179 residues: Large ribosomal subunit protein uL6 (179 aa).

It belongs to the universal ribosomal protein uL6 family. As to quaternary structure, part of the 50S ribosomal subunit.

Functionally, this protein binds to the 23S rRNA, and is important in its secondary structure. It is located near the subunit interface in the base of the L7/L12 stalk, and near the tRNA binding site of the peptidyltransferase center. The chain is Large ribosomal subunit protein uL6 from Saccharopolyspora erythraea (strain ATCC 11635 / DSM 40517 / JCM 4748 / NBRC 13426 / NCIMB 8594 / NRRL 2338).